A 311-amino-acid polypeptide reads, in one-letter code: Exosome complex component Rrp4 (311 aa).

One can recognise an S1 motif domain in the interval 63-131 (GDVVIGEITD…EVKKVKLGLK (69 aa)). Residues 139–197 (RDGILVYITPTKVPRLIGKRGSMINMVKEKTHCDIVVGQNGVVWIKGEPDMERIAEKVV) form the KH domain. The disordered stretch occupies residues 222 to 311 (GVEPEIQVEE…EVKDENNSER (90 aa)). Over residues 241 to 300 (PESEDFEEASDYSEDVEVSPESEDIEEVSDESEDLEVESEDVEEGTDTPAAEEDDGEAGD) the composition is skewed to acidic residues. A compositionally biased stretch (basic and acidic residues) spans 301–311 (AEVKDENNSER).

This sequence belongs to the RRP4 family. In terms of assembly, component of the archaeal exosome complex. Forms a trimer of Rrp4 and/or Csl4 subunits. The trimer associates with a hexameric ring-like arrangement composed of 3 Rrp41-Rrp42 heterodimers.

It localises to the cytoplasm. Functionally, non-catalytic component of the exosome, which is a complex involved in RNA degradation. Increases the RNA binding and the efficiency of RNA degradation. Confers strong poly(A) specificity to the exosome. This Methanothermobacter thermautotrophicus (strain ATCC 29096 / DSM 1053 / JCM 10044 / NBRC 100330 / Delta H) (Methanobacterium thermoautotrophicum) protein is Exosome complex component Rrp4.